An 87-amino-acid polypeptide reads, in one-letter code: Ribonuclease P protein component 1 (87 aa).

The protein belongs to the eukaryotic/archaeal RNase P protein component 1 family. In terms of assembly, consists of a catalytic RNA component and at least 4-5 protein subunits.

It is found in the cytoplasm. The catalysed reaction is Endonucleolytic cleavage of RNA, removing 5'-extranucleotides from tRNA precursor.. Its function is as follows. Part of ribonuclease P, a protein complex that generates mature tRNA molecules by cleaving their 5'-ends. The chain is Ribonuclease P protein component 1 from Thermoplasma acidophilum (strain ATCC 25905 / DSM 1728 / JCM 9062 / NBRC 15155 / AMRC-C165).